The chain runs to 393 residues: Formate-dependent phosphoribosylglycinamide formyltransferase (393 aa).

Residues 22–23 (EL) and glutamate 82 contribute to the N(1)-(5-phospho-beta-D-ribosyl)glycinamide site. Residues arginine 114, lysine 155, 160-165 (SSGKGQ), 195-198 (EGFI), and glutamate 203 each bind ATP. In terms of domain architecture, ATP-grasp spans 119–308 (RLAAEELDLP…QFALHARAIL (190 aa)). Residues glutamate 267 and glutamate 279 each contribute to the Mg(2+) site. Residues aspartate 286, lysine 356, and 363-364 (RR) each bind N(1)-(5-phospho-beta-D-ribosyl)glycinamide.

Belongs to the PurK/PurT family. In terms of assembly, homodimer.

The catalysed reaction is N(1)-(5-phospho-beta-D-ribosyl)glycinamide + formate + ATP = N(2)-formyl-N(1)-(5-phospho-beta-D-ribosyl)glycinamide + ADP + phosphate + H(+). The protein operates within purine metabolism; IMP biosynthesis via de novo pathway; N(2)-formyl-N(1)-(5-phospho-D-ribosyl)glycinamide from N(1)-(5-phospho-D-ribosyl)glycinamide (formate route): step 1/1. Its function is as follows. Involved in the de novo purine biosynthesis. Catalyzes the transfer of formate to 5-phospho-ribosyl-glycinamide (GAR), producing 5-phospho-ribosyl-N-formylglycinamide (FGAR). Formate is provided by PurU via hydrolysis of 10-formyl-tetrahydrofolate. This is Formate-dependent phosphoribosylglycinamide formyltransferase from Pseudomonas putida (strain W619).